The following is a 1418-amino-acid chain: ABC transporter G family member 38 (1418 aa).

Positions methionine 1–aspartate 27 are disordered. The ABC transporter 1 domain occupies threonine 147–glutamate 419. Glycine 179–serine 186 contributes to the ATP binding site. The region spanning glutamate 497–phenylalanine 710 is the ABC transmembrane type-2 1 domain. 6 consecutive transmembrane segments (helical) span residues threonine 516–tryptophan 536, glycine 548–phenylalanine 568, isoleucine 600–threonine 620, tyrosine 634–valine 654, valine 659–valine 679, and phenylalanine 729–leucine 749. One can recognise an ABC transporter 2 domain in the interval methionine 821–arginine 1073. An ATP-binding site is contributed by glycine 866–threonine 873. The region spanning serine 1146–tyrosine 1360 is the ABC transmembrane type-2 2 domain. The next 7 membrane-spanning stretches (helical) occupy residues alanine 1167–leucine 1187, isoleucine 1197–alanine 1217, valine 1249–glycine 1269, isoleucine 1284–valine 1304, isoleucine 1310–isoleucine 1330, tryptophan 1341–glycine 1361, and phenylalanine 1387–alanine 1407.

It belongs to the ABC transporter superfamily. ABCG family. PDR (TC 3.A.1.205) subfamily. As to expression, expressed in roots and siliques at low levels.

It is found in the membrane. Its function is as follows. May be a general defense protein. In Arabidopsis thaliana (Mouse-ear cress), this protein is ABC transporter G family member 38 (ABCG38).